Consider the following 491-residue polypeptide: Trehalose-6-phosphate synthase (491 aa).

A D-glucose 6-phosphate-binding site is contributed by R22. Residue 42–43 (GG) coordinates UDP-alpha-D-glucose. Positions 100 and 154 each coordinate D-glucose 6-phosphate. UDP-alpha-D-glucose is bound by residues R296 and K301. R334 contacts D-glucose 6-phosphate. A UDP-alpha-D-glucose-binding site is contributed by 399-403 (LVAKE).

It belongs to the glycosyltransferase 20 family. Homotetramer.

The enzyme catalyses ADP-alpha-D-glucose + D-glucose 6-phosphate = alpha,alpha-trehalose 6-phosphate + ADP + H(+). The catalysed reaction is CDP-alpha-D-glucose + D-glucose 6-phosphate = alpha,alpha-trehalose 6-phosphate + CDP + H(+). It catalyses the reaction GDP-alpha-D-glucose + D-glucose 6-phosphate = alpha,alpha-trehalose 6-phosphate + GDP + H(+). It carries out the reaction TDP-alpha-D-glucose + D-glucose 6-phosphate = 5-methyl-UDP + alpha,alpha-trehalose 6-phosphate + H(+). The enzyme catalyses D-glucose 6-phosphate + UDP-alpha-D-glucose = alpha,alpha-trehalose 6-phosphate + UDP + H(+). It functions in the pathway glycan biosynthesis; trehalose biosynthesis. In terms of biological role, probably involved in the osmoprotection via the biosynthesis of trehalose and in the production of glycogen and alpha-glucan via the TreS-Pep2 branch involved in the biosynthesis of maltose-1-phosphate (M1P). Catalyzes the transfer of glucose from UDP-glucose (UDP-Glc) to D-glucose 6-phosphate (Glc-6-P) to form trehalose-6-phosphate. Probably also able to use ADP-Glc, CDP-Glc, GDP-Glc and TDP-Glc as glucosyl donors. This Mycolicibacterium vanbaalenii (strain DSM 7251 / JCM 13017 / BCRC 16820 / KCTC 9966 / NRRL B-24157 / PYR-1) (Mycobacterium vanbaalenii) protein is Trehalose-6-phosphate synthase.